A 308-amino-acid chain; its full sequence is Urease subunit beta (308 aa).

One can recognise a Urease domain in the interval 131–308; sequence GGIDTHIHFI…STNPTIPFTK (178 aa). Ni(2+) contacts are provided by H136, H138, K219, H248, and H274. The residue at position 219 (K219) is an N6-carboxylysine.

It belongs to the metallo-dependent hydrolases superfamily. Urease alpha subunit family. As to quaternary structure, heterohexamer of 3 UreA (alpha) and 3 UreB (beta) subunits. Ni cation serves as cofactor. Carboxylation allows a single lysine to coordinate two nickel ions.

The protein resides in the cytoplasm. The catalysed reaction is urea + 2 H2O + H(+) = hydrogencarbonate + 2 NH4(+). Its pathway is nitrogen metabolism; urea degradation; CO(2) and NH(3) from urea (urease route): step 1/1. The sequence is that of Urease subunit beta (ureB) from Helicobacter mustelae.